A 179-amino-acid polypeptide reads, in one-letter code: Cell division protein SepF (179 aa).

A disordered region spans residues 19–55; it reads DSSLPYEKRDEPVFTSVNSSQEPALPMNQPSQSAGAK. Residues 33–55 show a composition bias toward polar residues; that stretch reads TSVNSSQEPALPMNQPSQSAGAK.

This sequence belongs to the SepF family. In terms of assembly, homodimer. Interacts with FtsZ.

It localises to the cytoplasm. Cell division protein that is part of the divisome complex and is recruited early to the Z-ring. Probably stimulates Z-ring formation, perhaps through the cross-linking of FtsZ protofilaments. Its function overlaps with FtsA. The protein is Cell division protein SepF of Streptococcus pneumoniae (strain JJA).